Reading from the N-terminus, the 256-residue chain is 2,3,4,5-tetrahydropyridine-2,6-dicarboxylate N-acetyltransferase (256 aa).

The protein belongs to the transferase hexapeptide repeat family. DapH subfamily.

It carries out the reaction (S)-2,3,4,5-tetrahydrodipicolinate + acetyl-CoA + H2O = L-2-acetamido-6-oxoheptanedioate + CoA. The protein operates within amino-acid biosynthesis; L-lysine biosynthesis via DAP pathway; LL-2,6-diaminopimelate from (S)-tetrahydrodipicolinate (acetylase route): step 1/3. Its function is as follows. Catalyzes the transfer of an acetyl group from acetyl-CoA to tetrahydrodipicolinate. The chain is 2,3,4,5-tetrahydropyridine-2,6-dicarboxylate N-acetyltransferase from Lactococcus lactis subsp. cremoris (strain MG1363).